A 252-amino-acid polypeptide reads, in one-letter code: MKPAKVSLLRRLLHSLKHVDCNIAKRFPSTIKIVKLLMIFMVFTPISSIYAEDVYQNFEELKNNEDPSDYGVVTKETGSPVLVLAIHGGGIEGGTSEVARELSKEYSMYLFEGLKSAGNSVLHITSTHFDEPRALKMTGNHEYVISLHGYAEEDQQIEVGGTDRVRAADLVEKLQHAGFPAVLLNMDHPHAGVSPNNIANKSKTGLSIQIEMSTGFRKSLFGIFSLKSRAVTQNERFYEFTEVMFRFLKNSY.

The chain crosses the membrane as a helical span at residues 33–51; it reads IVKLLMIFMVFTPISSIYA.

The protein belongs to the UPF0714 family.

It localises to the cell membrane. The polypeptide is UPF0714 protein YndL (yndL) (Bacillus subtilis (strain 168)).